Reading from the N-terminus, the 364-residue chain is MRLLGKLRASAASSAPLEPAFSNVLTPNRIPEFFIPPRLPTPYAPESSPPAAALPRRCAAEPDLWLRGADDGAGRTDWDPRSQAALSLPHLPRALTAYGFCALLESPHTRRKESLFLGSPSSAALPPAPRPRAHTYGGGGGDAPLAPGARSPIATPAARGGPSPSLDTLAPPPRCRRLLRAPEGLLRRALRAGRSRGLARARSVSSGDGEDDDEDESRASPGSPTQAPVTSLSPHRDPRPERLEAEGTVTLGRAGGALRLAAEYNRASGRLRVRLLRAEGPAGGAAEPRAPVGCRISFVLKPRGAVVRRSRRAVLEQDLCLDGLSEDEVRRLAVRVKAENRGRGLERGRLLGQGELLLGPLLLL.

2 disordered regions span residues 118–175 (GSPS…PPRC) and 192–242 (AGRS…RPER). Residues 220 to 233 (SPGSPTQAPVTSLS) are compositionally biased toward polar residues. Positions 254 to 364 (AGGALRLAAE…ELLLGPLLLL (111 aa)) constitute a C2 domain.

This sequence belongs to the C2CD4 family.

The protein localises to the nucleus. May be involved in inflammatory process. May regulate cell architecture and adhesion. In Bos taurus (Bovine), this protein is C2 calcium-dependent domain-containing protein 4A (C2CD4A).